Consider the following 338-residue polypeptide: uncharacterized protein (338 aa).

This is an uncharacterized protein from Schizosaccharomyces pombe (strain 972 / ATCC 24843) (Fission yeast).